The chain runs to 210 residues: N-(5'-phosphoribosyl)anthranilate isomerase (210 aa).

This sequence belongs to the TrpF family.

It carries out the reaction N-(5-phospho-beta-D-ribosyl)anthranilate = 1-(2-carboxyphenylamino)-1-deoxy-D-ribulose 5-phosphate. Its pathway is amino-acid biosynthesis; L-tryptophan biosynthesis; L-tryptophan from chorismate: step 3/5. In Magnetococcus marinus (strain ATCC BAA-1437 / JCM 17883 / MC-1), this protein is N-(5'-phosphoribosyl)anthranilate isomerase.